Reading from the N-terminus, the 160-residue chain is 2-C-methyl-D-erythritol 2,4-cyclodiphosphate synthase (160 aa).

2 residues coordinate a divalent metal cation: D12 and H14. 4-CDP-2-C-methyl-D-erythritol 2-phosphate-binding positions include 12–14 and 38–39; these read DVH and HS. H46 lines the a divalent metal cation pocket. 4-CDP-2-C-methyl-D-erythritol 2-phosphate-binding positions include 60 to 62, 65 to 69, 136 to 139, F143, and R146; these read DIG, FPDTD, and TTTE.

It belongs to the IspF family. As to quaternary structure, homotrimer. The cofactor is a divalent metal cation.

The enzyme catalyses 4-CDP-2-C-methyl-D-erythritol 2-phosphate = 2-C-methyl-D-erythritol 2,4-cyclic diphosphate + CMP. It participates in isoprenoid biosynthesis; isopentenyl diphosphate biosynthesis via DXP pathway; isopentenyl diphosphate from 1-deoxy-D-xylulose 5-phosphate: step 4/6. In terms of biological role, involved in the biosynthesis of isopentenyl diphosphate (IPP) and dimethylallyl diphosphate (DMAPP), two major building blocks of isoprenoid compounds. Catalyzes the conversion of 4-diphosphocytidyl-2-C-methyl-D-erythritol 2-phosphate (CDP-ME2P) to 2-C-methyl-D-erythritol 2,4-cyclodiphosphate (ME-CPP) with a corresponding release of cytidine 5-monophosphate (CMP). In Acinetobacter baumannii (strain SDF), this protein is 2-C-methyl-D-erythritol 2,4-cyclodiphosphate synthase.